Here is an 80-residue protein sequence, read N- to C-terminus: Probable Rubredoxin-1 (80 aa).

The Rubredoxin-like domain maps to 19-72; the sequence is YRKYKCKVCGWVYDPLKGDPSQNIPPKTPFEELPDTWICPVCRGKVGKESFEPL. Fe cation-binding residues include Cys-24, Cys-27, Cys-57, and Cys-60.

The protein belongs to the rubredoxin family. The cofactor is Fe(3+).

Functionally, rubredoxin is a small nonheme, iron protein lacking acid-labile sulfide. Its single Fe, chelated to 4 Cys, functions as an electron acceptor and may also stabilize the conformation of the molecule. In Methanocaldococcus jannaschii (strain ATCC 43067 / DSM 2661 / JAL-1 / JCM 10045 / NBRC 100440) (Methanococcus jannaschii), this protein is Probable Rubredoxin-1.